A 244-amino-acid chain; its full sequence is Probable transcriptional regulatory protein DNO_1179 (244 aa).

The protein belongs to the TACO1 family.

It is found in the cytoplasm. This Dichelobacter nodosus (strain VCS1703A) protein is Probable transcriptional regulatory protein DNO_1179.